A 530-amino-acid chain; its full sequence is Berberine bridge enzyme-like 22 (530 aa).

The signal sequence occupies residues 1–22 (MRELFMYLFLLFLVLCVKSVYS). Cys-32 and Cys-99 are oxidised to a cystine. 6 N-linked (GlcNAc...) asparagine glycosylation sites follow: Asn-39, Asn-47, Asn-68, Asn-75, Asn-141, and Asn-486. Positions 77-251 (TSLKPILIVK…LSWKVKLARV (175 aa)) constitute an FAD-binding PCMH-type domain. The segment at residues 114-176 (HDYEGLSYLS…KIHAFAAGIC (63 aa)) is a cross-link (6-(S-cysteinyl)-8alpha-(pros-histidyl)-FAD (His-Cys)).

Belongs to the oxygen-dependent FAD-linked oxidoreductase family. It depends on FAD as a cofactor. Post-translationally, the FAD cofactor is bound via a bicovalent 6-S-cysteinyl, 8alpha-N1-histidyl FAD linkage. In terms of tissue distribution, accumulates in cell walls of etiolated hypocotyls.

It is found in the secreted. Its subcellular location is the cell wall. This Arabidopsis thaliana (Mouse-ear cress) protein is Berberine bridge enzyme-like 22.